The chain runs to 1309 residues: Clustered mitochondria protein homolog (1309 aa).

Residues 1-34 (MLLNGDCPESLKKEAAAAEPPRENGLDEAGPGDE) are disordered. Over residues 9–25 (ESLKKEAAAAEPPRENG) the composition is skewed to basic and acidic residues. Ser279 and Ser281 each carry phosphoserine. Residues 335–577 (RAEDAYTSRL…RTFPPDLNFL (243 aa)) enclose the Clu domain. Residues 636-651 (LETPSSLENGGPSSLE) show a composition bias toward polar residues. The disordered stretch occupies residues 636-674 (LETPSSLENGGPSSLESKSEDPPGQEAGSEEEGSSASGL). Ser654, Ser664, and Ser723 each carry phosphoserine. TPR repeat units follow at residues 978–1011 (AFHF…FNNV), 1020–1053 (CACL…SERV), 1104–1137 (ALLD…STKY), and 1146–1179 (ALSH…YKTQ). The span at 1264 to 1278 (HQLQEASRNRDRAEE) shows a compositional bias: basic and acidic residues. The tract at residues 1264 to 1309 (HQLQEASRNRDRAEEPMATEPAPAGAPGDLGSQPPAAKDPSPSVQG) is disordered. A compositionally biased stretch (low complexity) spans 1279–1290 (PMATEPAPAGAP).

Belongs to the CLU family.

Its subcellular location is the cytoplasm. It localises to the cytoplasmic granule. In terms of biological role, mRNA-binding protein involved in proper cytoplasmic distribution of mitochondria. Specifically binds mRNAs of nuclear-encoded mitochondrial proteins in the cytoplasm and regulates transport or translation of these transcripts close to mitochondria, playing a role in mitochondrial biogenesis. The chain is Clustered mitochondria protein homolog (CLUH) from Homo sapiens (Human).